We begin with the raw amino-acid sequence, 356 residues long: MTGPRTLLVMAGGTGGHVFPGLAVAHALREQGWKVVWLGNRTGMEATLVPKHDIPMEFIQFGGLRGKGLVTKFLLPLNLLRAFWQSIAALRRVRPSVVLGMGGYITFPAGMMASLLGRPLVLHEQNSIAGLANKVLAKVADRVLCAFPDTLPGGEWTGNPVREELAHLDAPEARYDQRSGPLRILVVGGSLGAAALNEVVPKAIALLPGGERPVVTHQAGAKQIDTLRANYAAAQVPAQTLPFIDDMARAYADADLVICRAGAMTVSEVAAAGVAAMFVPFPHAVDDHQTTNAEFLSKQGAALLVQQKDLTAEGLAQTIASLTRPQLKDMARLARGLAKPEATRRVAEICSQLARD.

Residues 14-16 (TGG), Asn126, Arg162, Ser190, Ile244, and Gln289 each bind UDP-N-acetyl-alpha-D-glucosamine.

This sequence belongs to the glycosyltransferase 28 family. MurG subfamily.

The protein resides in the cell inner membrane. The catalysed reaction is di-trans,octa-cis-undecaprenyl diphospho-N-acetyl-alpha-D-muramoyl-L-alanyl-D-glutamyl-meso-2,6-diaminopimeloyl-D-alanyl-D-alanine + UDP-N-acetyl-alpha-D-glucosamine = di-trans,octa-cis-undecaprenyl diphospho-[N-acetyl-alpha-D-glucosaminyl-(1-&gt;4)]-N-acetyl-alpha-D-muramoyl-L-alanyl-D-glutamyl-meso-2,6-diaminopimeloyl-D-alanyl-D-alanine + UDP + H(+). The protein operates within cell wall biogenesis; peptidoglycan biosynthesis. Functionally, cell wall formation. Catalyzes the transfer of a GlcNAc subunit on undecaprenyl-pyrophosphoryl-MurNAc-pentapeptide (lipid intermediate I) to form undecaprenyl-pyrophosphoryl-MurNAc-(pentapeptide)GlcNAc (lipid intermediate II). The sequence is that of UDP-N-acetylglucosamine--N-acetylmuramyl-(pentapeptide) pyrophosphoryl-undecaprenol N-acetylglucosamine transferase from Cupriavidus necator (strain ATCC 17699 / DSM 428 / KCTC 22496 / NCIMB 10442 / H16 / Stanier 337) (Ralstonia eutropha).